A 240-amino-acid chain; its full sequence is Probable phosphatase Pcar_2586 (240 aa).

Residues His-12, His-14, His-20, His-45, Glu-78, His-105, His-136, Asp-197, and His-199 each contribute to the Zn(2+) site.

It belongs to the PHP family. It depends on Zn(2+) as a cofactor.

The chain is Probable phosphatase Pcar_2586 from Syntrophotalea carbinolica (strain DSM 2380 / NBRC 103641 / GraBd1) (Pelobacter carbinolicus).